The primary structure comprises 399 residues: P2X purinoceptor 1 (399 aa).

At 1–28 (MARRLQDELSAFFFEYDTPRMVLVRNKK) the chain is on the cytoplasmic side. The helical transmembrane segment at 29–50 (VGVIFRLIQLVVLVYVIGWVFV) threads the bilayer. Over 51–338 (YEKGYQTSSD…IPTMTTIGSG (288 aa)) the chain is Extracellular. Lysine 68, lysine 70, and lysine 140 together coordinate CTP. Position 70 (lysine 70) interacts with ATP. 3 cysteine pairs are disulfide-bonded: cysteine 117-cysteine 165, cysteine 126-cysteine 149, and cysteine 132-cysteine 159. Residues asparagine 153 and asparagine 184 are each glycosylated (N-linked (GlcNAc...) asparagine). Threonine 186 contributes to the CTP binding site. An ATP-binding site is contributed by threonine 186. N-linked (GlcNAc...) asparagine glycosylation is present at asparagine 210. Disulfide bonds link cysteine 217–cysteine 227 and cysteine 261–cysteine 270. The ATP site is built by serine 286, asparagine 290, and arginine 292. Positions 290 and 292 each coordinate CTP. The N-linked (GlcNAc...) asparagine glycan is linked to asparagine 300. Lysine 309 contacts CTP. Lysine 309 is a binding site for ATP. The pore-forming motif stretch occupies residues 331–338 (TMTTIGSG). The helical transmembrane segment at 339-358 (IGIFGVATVLCDLLLLHILP) threads the bilayer. Topologically, residues 359–399 (KRHYYKQKKFKYAEDMGPGEGEHDPVATSSTLGLQENMRTS) are cytoplasmic. A disordered region spans residues 374 to 399 (MGPGEGEHDPVATSSTLGLQENMRTS). The segment covering 385 to 399 (ATSSTLGLQENMRTS) has biased composition (polar residues). Phosphoserine occurs at positions 387 and 388. Phosphothreonine is present on threonine 389.

The protein belongs to the P2X receptor family. In terms of assembly, functional P2XRs are organized as homomeric and heteromeric trimers. Homotrimer. Forms heterodimer with P2RX2. Forms heterodimer with P2RX4. Forms heterodimer with P2RX5. In terms of tissue distribution, high levels in vas deferens and urinary bladder. Lower extent in spinal cord, coeliac ganglion, lung and spleen (probably in the smooth muscle part of both organs).

It is found in the cell membrane. It carries out the reaction Ca(2+)(in) = Ca(2+)(out). It catalyses the reaction K(+)(in) = K(+)(out). The enzyme catalyses Na(+)(in) = Na(+)(out). Its activity is regulated as follows. Activated by low concentrations of ATP (&lt;1 uM). Undergoes rapid desensitisation. Sensitives to the ATP agonist:alpha/beta-methylene-ATP. Modulated by cholesterol. Functionally, ATP-gated nonselective transmembrane cation channel permeable to potassium, sodium and with relatively high calcium permeability. Furthermore, CTP functions as a weak affinity agonist for P2RX1. Plays a role a role in urogenital, immune and cardiovascular function. Specifically, plays an important role in neurogenic contraction of smooth muscle of the vas deferens, and therefore is essential for normal male reproductive function. In addition, contributes to smooth muscle contractions of the urinary bladder. On platelets, contributes to platelet activation and aggregation and thereby, also to thrombosis. On neutrophils, it is involved in chemotaxis and in mitigating the activation of circulating cells. This chain is P2X purinoceptor 1 (P2rx1), found in Rattus norvegicus (Rat).